We begin with the raw amino-acid sequence, 539 residues long: MKFDPEKIKKDAKENFDHAWNEGKKMVKTPTLNERYPRTTLRYGKAHPVYDTIQKLREAYMRMGFEEMMNPLIVDEKEVHKQFGSEALAVLDRCFYLAGLPRPNVGISDERIAQITEILGDIGEEGIDKIRKELHAYKKGKIEGDDLVPEISAALEVSDALVADMIDRVFPEFKELIPQASTKTLRSHMTSGWFISLGALLEREEPPFQFFSIDRCFRREQQEDASRLMTYYSASCVIMDEDVTVDHGKAVSEGLLSQFGFEKFLFRPDEKRSKYYVPDTQTEVFAFHPKLVGSNSKYSDGWIEVATFGIYSPTALAEYDIPYPVMNLGLGVERLAMILHDAPDVRSLTYPQIPQYSEWEMSDSGLAKQVFVDRMPETPEGQEIASAVVAQCELHGEEPSPCEFPAWEGEVCGRKVKVSVIEPEENTKLCGPAAFNEVVAYQGDILGIPNNKKWQKAFENHSARAGIRFIEAFAAQAAREIEEAAMSGADEHIVRIRIVKVPSEVNLKIGATAQRYITGKNKKIDIRGPVFTSVKAEFE.

Substrate is bound by residues 188–190, 233–235, 275–276, and Asn-327; these read HMT, SAS, and YY.

The protein belongs to the class-II aminoacyl-tRNA synthetase family. O-phosphoseryl-tRNA(Cys) synthetase subfamily. Homotetramer. Interacts with SepCysS.

It catalyses the reaction tRNA(Cys) + O-phospho-L-serine + ATP = O-phospho-L-seryl-tRNA(Cys) + AMP + diphosphate. In terms of biological role, catalyzes the attachment of O-phosphoserine (Sep) to tRNA(Cys). This chain is O-phosphoserine--tRNA(Cys) ligase, found in Methanosarcina mazei (strain ATCC BAA-159 / DSM 3647 / Goe1 / Go1 / JCM 11833 / OCM 88) (Methanosarcina frisia).